Consider the following 735-residue polypeptide: Rho GTPase-activating protein SYDE1 (735 aa).

A disordered region spans residues 1-253 (MAEPLLRKTF…SPTSFRPYEV (253 aa)). Positions 14 to 31 (RGREKLPRKKSDAKERGH) are enriched in basic and acidic residues. Residues 35–46 (RPEPSPPEPEPQ) are compositionally biased toward pro residues. The span at 47–71 (APEGSQAGAEGPSSPEASRSPARGA) shows a compositional bias: low complexity. Over residues 122–131 (PPAPEPPGPQ) the composition is skewed to pro residues. A compositionally biased stretch (gly residues) spans 211 to 221 (GGPGPAAGPGG). S224, S231, S235, and S244 each carry phosphoserine. In terms of domain architecture, C2 spans 249–366 (RPYEVGPAAR…FRGCQAQQLA (118 aa)). The Rho-GAP domain occupies 398 to 604 (LPLPLLVERE…YLLQSWPDPR (207 aa)). S575 carries the phosphoserine modification. 2 disordered regions span residues 608–651 (QSPD…SNRY) and 674–696 (DYDH…PRVT). 2 positions are modified to phosphoserine: S681 and S683.

Palmitoylated. Probably palmitoylated by ZDHHC3 and ZDHHC7. As to expression, expressed in trophoblast cells of placental villi.

Its function is as follows. GTPase activator for the Rho-type GTPases. As a GCM1 downstream effector, it is involved in placental development and positively regulates trophoblast cells migration. It regulates cytoskeletal remodeling by controlling the activity of Rho GTPases including RHOA, CDC42 and RAC1. The chain is Rho GTPase-activating protein SYDE1 (SYDE1) from Homo sapiens (Human).